The chain runs to 582 residues: NAB transcription cofactor mab-10 (582 aa).

Positions 1 to 70 (MSSSSSSSLP…SSSSQRQSTS (70 aa)) are enriched in low complexity. 4 disordered regions span residues 1–84 (MSSS…MPTP), 257–287 (SDQQ…PAGI), 333–365 (PPSS…SPFL), and 516–582 (SRKR…LPES). The tract at residues 83–161 (TPTTLSEWQL…EYSQDQTAFN (79 aa)) is NCD1. 2 stretches are compositionally biased toward low complexity: residues 257–276 (SDQQ…STSS) and 333–345 (PPSS…PSTS). An NCD2 region spans residues 396–519 (LSTAQISRLA…GYNYAKSRKR (124 aa)). The segment covering 573–582 (EKMKGELPES) has biased composition (basic and acidic residues).

This sequence belongs to the NAB family. Interacts with transcription factor lin-29 (via C-terminus).

The protein localises to the nucleus. Functionally, transcriptional cofactor. Heterochronic protein, involved in timing of a subset of differentiation events during the larval-to-adult transition. Promotes hypodermal terminal differentiation, together with transcription factor lin-29, perhaps as part of a transcriptional complex. Involved in regulating molting by repressing the expression of nuclear hormone receptors nhr-23 and nhr-25 in the adult hypoderm, probably acting in concert with lin-29. In Caenorhabditis elegans, this protein is NAB transcription cofactor mab-10.